The sequence spans 861 residues: Methyltransferase/ribosomally synthesized type III borosin cyclic peptide precursor aboMAa (861 aa).

Positions 1 to 279 (MSSPAVETKV…AISTFYLPPK (279 aa)) are methyltransferase domain. Active-site residues include Arg100, Tyr104, and Tyr126. Tyr126, His128, Val131, Ala158, Gln200, Ala241, Ser272, and Thr273 together coordinate S-adenosyl-L-methionine. Positions 280 to 408 (ALSPLHEESA…GLVRSVMKTS (129 aa)) are clasp domain. The segment at 409 to 799 (PEDVAKQFVQ…PPDLEELPIP (391 aa)) is type III-specific C-terminal domain. Disordered regions lie at residues 575 to 596 (NGAFPSGGGGGSGGGGGSSSQG) and 772 to 801 (EAAEKDSAVDDEKFADEEPPDLEELPIPDA). Over residues 579–593 (PSGGGGGSGGGGGSS) the composition is skewed to gly residues. Residues 772 to 783 (EAAEKDSAVDDE) show a composition bias toward basic and acidic residues. Over residues 784–797 (KFADEEPPDLEELP) the composition is skewed to acidic residues. Val805 and Val807 each carry N-methylvaline. 9 consecutive repeat copies span residues 805–809 (VDVTD), 810–814 (VDVTD), 815–819 (VDVTD), 820–824 (VDVTD), 825–829 (VDVTD), 830–834 (VDVTD), 835–839 (VDVTD), 840–844 (VDVTD), and 845–849 (VDVTD). Positions 805 to 854 (VDVTDVDVTDVDVTDVDVTDVDVTDVDVTDVDVTDVDVTDVDVTDVDVVD) are 10 X 5 AA tandem repeats of VDVTD. N-methylthreonine is present on Thr808. N-methylvaline is present on residues Val810 and Val812. At Thr813 the chain carries N-methylthreonine. Residues Val815 and Val817 each carry the N-methylvaline modification. Position 818 is an N-methylthreonine (Thr818). 2 positions are modified to N-methylvaline: Val820 and Val822. Thr823 bears the N-methylthreonine mark. Residues Val825 and Val827 each carry the N-methylvaline modification. Thr828 carries the N-methylthreonine modification. Val830 and Val832 each carry N-methylvaline. N-methylthreonine is present on Thr833. One copy of the 10; approximate repeat lies at 850-854 (VDVVD).

This sequence in the N-terminal section; belongs to the precorrin methyltransferase family. In terms of processing, aboMA automethylates at Val-805, Val-807, Thr-808, Val-810, Val-812, Thr-813, Val-815, Val-817, Thr-818, Val-820, Val-822, Thr-823, Val-825, Val-827 and Thr-828, Val-830, Val-832 and T-833 before being processed by a prolyloligopeptidase which likely forms a peptidyl ester upon removal of the follower propeptide, which then undergoes macrocyclization with the N-terminus of the modified core peptide. Peptide backbone alpha-N-methylations change the physicochemical properties of amide bonds to provide structural constraints and other favorable characteristics including biological membrane permeability to peptides.

It functions in the pathway secondary metabolite biosynthesis. Functionally, fusion protein of the methyltransferase aboM and a type III borosin core peptide; part of the gene cluster that mediates the biosynthesis of a type III borosin, a highly methylated cyclic peptide with potent biological activities. Type III borosins derive from the C-terminus of the fusion protein, and it is the same protein that methylates its own C-terminus using S-adenosyl methionine (SAM). The C-terminus is subsequently cleaved off and macrocyclized by a prolyloligopeptidase to give the final product. The protein is Methyltransferase/ribosomally synthesized type III borosin cyclic peptide precursor aboMAa of Anomoporia bombycina (Polyporus bombycinus).